An 80-amino-acid polypeptide reads, in one-letter code: Acyl carrier protein (80 aa).

The 79-residue stretch at 1 to 79 folds into the Carrier domain; it reads MTEEEIFNKI…EAVEYIKSHQ (79 aa). Ser39 is modified (O-(pantetheine 4'-phosphoryl)serine).

This sequence belongs to the acyl carrier protein (ACP) family. In terms of processing, 4'-phosphopantetheine is transferred from CoA to a specific serine of apo-ACP by AcpS. This modification is essential for activity because fatty acids are bound in thioester linkage to the sulfhydryl of the prosthetic group.

Its subcellular location is the cytoplasm. It participates in lipid metabolism; fatty acid biosynthesis. Carrier of the growing fatty acid chain in fatty acid biosynthesis. This is Acyl carrier protein from Lactobacillus johnsonii (strain CNCM I-12250 / La1 / NCC 533).